Reading from the N-terminus, the 253-residue chain is MGEFNEKKATCGTVCLKYLLFTYNCCFWLAGLAVMAVGIWTLALKSDYISLLASSTYLATAYILVVAGVVVMVTGVLGCCATFKERRNLLRLYFILLLIIFLLEIIAGILAYVYYQQLNTELKENLKDTMIKRYHQSGHEGVTNAVDKLQQEFHCCGSNNSRDWRDSEWIRSGEADSRVVPDSCCKTVVTGCGKREHASNIYKVEGGCITKLESFIQEHLRVIGAVGIGIACVQVFGMIFTCCLYRSLKLEHY.

The Cytoplasmic segment spans residues 1 to 18 (MGEFNEKKATCGTVCLKY). Residues C11 and C15 are each lipidated (S-palmitoyl cysteine). The helical transmembrane segment at 19–39 (LLFTYNCCFWLAGLAVMAVGI) threads the bilayer. Residues 40-57 (WTLALKSDYISLLASSTY) lie on the Extracellular side of the membrane. The helical transmembrane segment at 58–78 (LATAYILVVAGVVVMVTGVLG) threads the bilayer. Residues 79-91 (CCATFKERRNLLR) are Cytoplasmic-facing. A helical transmembrane segment spans residues 92–112 (LYFILLLIIFLLEIIAGILAY). Residues 113-221 (VYYQQLNTEL…LESFIQEHLR (109 aa)) are Extracellular-facing. The N-linked (GlcNAc...) asparagine glycan is linked to N159. Residues 222-242 (VIGAVGIGIACVQVFGMIFTC) form a helical membrane-spanning segment. Residues C242 and C243 are each lipidated (S-palmitoyl cysteine). At 243 to 253 (CLYRSLKLEHY) the chain is on the cytoplasmic side.

Belongs to the tetraspanin (TM4SF) family. As to quaternary structure, interacts with integrins ITGA3:ITGB1, ITGA5:ITGB1, ITGA3:ITGB1 and ITGA6:ITGB4 and with CD9 and CD181. Interacts (via the second extracellular domain) with integrin ITGAV:ITGB3. Interacts with ITGA3; this interaction modulates ITGA3 glycosylation pattern. Interacts with F11R. Interacts with RAC1 and CDC42; these interactions mediate physical association of RAC1 and CDC42 with integrin adhesion receptor complexes. In terms of processing, palmitoylated. Palmitoylation by ZDHHC2 regulates CD151 expression, association with other tetraspanin family proteins and function in cell adhesion. Post-translationally, ubiquitinated by RNF128 on lysine residues present in the tetraspanin amino terminus via 'Lys-48'-linked ubiquitin leading to proteasomal degradation.

It is found in the cell membrane. Its function is as follows. Structural component of specialized membrane microdomains known as tetraspanin-enriched microdomains (TERMs), which act as platforms for receptor clustering and signaling. Plays a role in various cellular and molecular mechanism through its association with both integrin and non-integrin proteins. These interactions facilitate critical cellular functions, including cell-to-cell communication, wound healing, platelet aggregation, trafficking, cell motility, and angiogenesis. Via interaction with JAM-A/F11R and integrin ITGA3:ITGB1, promotes the recruitment of signaling molecules such as RAC1, CDC42 and RhoGTPases to facilitate the polarization of epithelial cells and the reorganization of the actin cytoskeleton, which are critical steps in cell migration process. Regulates the glycosylation pattern of ITGA3:ITGB1 thereby modulating its activity. Plays an essential role in the maintenance of central laminin-binding integrin ITGA6:ITGB4-containing adhesion complexes. Essential for the proper assembly of the glomerular and tubular basement membranes in kidney. Contributes to T-cell activation by modulating integrin signaling leading to activation of downstream targets PTK2 and MAPK1/MAPK3. The chain is CD151 antigen (Cd151) from Rattus norvegicus (Rat).